A 37-amino-acid polypeptide reads, in one-letter code: Large ribosomal subunit protein bL36c (37 aa).

This sequence belongs to the bacterial ribosomal protein bL36 family.

It is found in the plastid. It localises to the chloroplast. This is Large ribosomal subunit protein bL36c from Pelargonium hortorum (Common geranium).